The sequence spans 380 residues: Probable tRNA sulfurtransferase (380 aa).

The 105-residue stretch at 58–162 (EEVIERLKKV…MAFVYAGVIE (105 aa)) folds into the THUMP domain. Residues 178-179 (LL), 203-204 (YF), R260, G282, and Q291 contribute to the ATP site.

The protein belongs to the ThiI family.

It localises to the cytoplasm. The catalysed reaction is [ThiI sulfur-carrier protein]-S-sulfanyl-L-cysteine + a uridine in tRNA + 2 reduced [2Fe-2S]-[ferredoxin] + ATP + H(+) = [ThiI sulfur-carrier protein]-L-cysteine + a 4-thiouridine in tRNA + 2 oxidized [2Fe-2S]-[ferredoxin] + AMP + diphosphate. It carries out the reaction [ThiS sulfur-carrier protein]-C-terminal Gly-Gly-AMP + S-sulfanyl-L-cysteinyl-[cysteine desulfurase] + AH2 = [ThiS sulfur-carrier protein]-C-terminal-Gly-aminoethanethioate + L-cysteinyl-[cysteine desulfurase] + A + AMP + 2 H(+). It functions in the pathway cofactor biosynthesis; thiamine diphosphate biosynthesis. Its function is as follows. Catalyzes the ATP-dependent transfer of a sulfur to tRNA to produce 4-thiouridine in position 8 of tRNAs, which functions as a near-UV photosensor. Also catalyzes the transfer of sulfur to the sulfur carrier protein ThiS, forming ThiS-thiocarboxylate. This is a step in the synthesis of thiazole, in the thiamine biosynthesis pathway. The sulfur is donated as persulfide by IscS. This Thermoanaerobacter sp. (strain X514) protein is Probable tRNA sulfurtransferase.